Reading from the N-terminus, the 555-residue chain is Undecaprenyl phosphate-alpha-4-amino-4-deoxy-L-arabinose arabinosyl transferase (555 aa).

11 helical membrane-spanning segments follow: residues Gly-6–Gly-26, Phe-87–Met-107, Leu-116–Leu-136, Phe-178–Ile-198, Leu-206–Leu-226, Ala-257–Leu-277, Glu-293–Gly-313, Leu-315–Glu-335, Val-351–Leu-371, Pro-384–Val-404, and Trp-411–Gln-431.

This sequence belongs to the glycosyltransferase 83 family.

The protein localises to the cell inner membrane. It carries out the reaction 4-amino-4-deoxy-alpha-L-arabinopyranosyl di-trans,octa-cis-undecaprenyl phosphate + lipid IVA = lipid IIA + di-trans,octa-cis-undecaprenyl phosphate.. The protein operates within lipopolysaccharide metabolism; 4-amino-4-deoxy-beta-L-arabinose-lipid A biosynthesis. In terms of biological role, catalyzes the transfer of the L-Ara4N moiety of the glycolipid undecaprenyl phosphate-alpha-L-Ara4N to lipid A. The modified arabinose is attached to lipid A and is required for resistance to polymyxin and cationic antimicrobial peptides. This is Undecaprenyl phosphate-alpha-4-amino-4-deoxy-L-arabinose arabinosyl transferase from Serratia proteamaculans (strain 568).